Reading from the N-terminus, the 513-residue chain is Homeobox and leucine zipper protein Homez (513 aa).

The homeobox 1 DNA-binding region spans 31–90 (WTQAVQTSELDGNEHLLQAFSYFPYPSLADIALLCLRHGLQMEKVKTWFMAQRLRCGISW). Glycyl lysine isopeptide (Lys-Gly) (interchain with G-Cter in SUMO2) cross-links involve residues Lys156, Lys174, and Lys176. Disordered stretches follow at residues 200-221 (LSKEQAGGGPDQSCGGGTASWN), 241-287 (SCKE…SFSP), 303-328 (RLRNNSVPSRVGPTEYLSPDMQHQRK), 402-429 (PAISTSSTRSLKEWAKTPPLPAPPPPPD), and 480-513 (LDEEEEEEDEELPEDGEEEEEEEEEEDDDVIIRD). A compositionally biased stretch (gly residues) spans 205–217 (AGGGPDQSCGGGT). Low complexity predominate over residues 248-260 (PSGTPPSSSASSP). Residue Ser320 is modified to Phosphoserine. 2 consecutive DNA-binding regions (homeobox) follow at residues 324-384 (QHQR…KHGQ) and 418-477 (TPPL…AEVV). The Nuclear localization signal motif lies at 327-332 (RKTKRK). A Phosphothreonine modification is found at Thr418. Positions 419–429 (PPLPAPPPPPD) are enriched in pro residues.

As to quaternary structure, homodimer or heterodimer (Potential). Interacts with HOXC8.

The protein localises to the nucleus. Its function is as follows. May function as a transcriptional regulator. In Rattus norvegicus (Rat), this protein is Homeobox and leucine zipper protein Homez (Homez).